Here is a 152-residue protein sequence, read N- to C-terminus: Ribosome maturation factor RimP (152 aa).

The protein belongs to the RimP family.

It localises to the cytoplasm. Required for maturation of 30S ribosomal subunits. The polypeptide is Ribosome maturation factor RimP (Salmonella arizonae (strain ATCC BAA-731 / CDC346-86 / RSK2980)).